The sequence spans 522 residues: MGCCGSSLRVGSHAPEKPPRRARPPPPPPQPHHPRRPSFTLNAHQAAASSSAASAAPAPAFAEFSLAELREATGGFAAANIVSESGEKAPNLVYRGRLQGAGGGGRAIAVKKFGKLAWPDPKQFAEEARGVGKLRHRRMANLIGYCCDGDERLLVAEFMPNDTLAKHLFHWENKAIEWAMRLRVAYNIAEALEYCSNEERPLYHDLNAYRVLFDENGDPRLSCFGLMKNSRDGKSYSTNLAYTPPEYLRNGRVTLESVVFSFGTILIDLLSGKRIPPTLALDMIRSRSIQAIMETNLEGKYSIEEATTLVDLASKCLQYEPRDRPDIKKLVSILQPLQTKSEVPSYVMLGVPKPEEVPKAPPAPQHPLSPMGEACSRMDLTAIHQILVSTHYRDDEGTNELSFQEWTQQMRDMLDARKRGDFAFRDKNFKQAIDCYTQFVDVGTMVSPTVYARRSLCHLMCDQPDAALRDAMQAQCVYPDWPTAFYMQAVALSKLNMQSDSLDMLNEASQLEEKRQKSIKGP.

Residues 1-54 are disordered; that stretch reads MGCCGSSLRVGSHAPEKPPRRARPPPPPPQPHHPRRPSFTLNAHQAAASSSAAS. Gly-2 is lipidated: N-myristoyl glycine. Positions 79–338 constitute a Protein kinase domain; it reads ANIVSESGEK…KLVSILQPLQ (260 aa). ATP contacts are provided by residues 85 to 93 and Lys-111; that span reads SGEKAPNLV. Residue Asp-205 is the Proton acceptor of the active site.

Belongs to the protein kinase superfamily. Ser/Thr protein kinase family.

It is found in the cell membrane. It carries out the reaction L-seryl-[protein] + ATP = O-phospho-L-seryl-[protein] + ADP + H(+). It catalyses the reaction L-threonyl-[protein] + ATP = O-phospho-L-threonyl-[protein] + ADP + H(+). In terms of biological role, probable serine/threonine kinase that functions as a positive regulator of plant immunity. May be involved in the regulation of pattern-triggered immunity (PTI). Does not seem to be involved in responses to brassinosteroid (BR) signaling. This Oryza sativa subsp. japonica (Rice) protein is Serine/threonine-protein kinase BSK1-2.